A 612-amino-acid polypeptide reads, in one-letter code: Threonine--tRNA ligase (612 aa).

Residues 218–509 (DHRKLGVELG…LSEHFGGNFP (292 aa)) are catalytic. Zn(2+)-binding residues include Cys310, His361, and His486.

Belongs to the class-II aminoacyl-tRNA synthetase family. In terms of assembly, homodimer. Zn(2+) serves as cofactor.

The protein localises to the cytoplasm. It catalyses the reaction tRNA(Thr) + L-threonine + ATP = L-threonyl-tRNA(Thr) + AMP + diphosphate + H(+). In terms of biological role, catalyzes the attachment of threonine to tRNA(Thr) in a two-step reaction: L-threonine is first activated by ATP to form Thr-AMP and then transferred to the acceptor end of tRNA(Thr). Also edits incorrectly charged L-seryl-tRNA(Thr). This chain is Threonine--tRNA ligase, found in Helicobacter pylori (strain HPAG1).